Reading from the N-terminus, the 344-residue chain is tRNA(Ile)-lysidine synthase (344 aa).

Ser30 to Ser35 contributes to the ATP binding site. The interval Pro323–Tyr344 is disordered.

Belongs to the tRNA(Ile)-lysidine synthase family.

It localises to the cytoplasm. The catalysed reaction is cytidine(34) in tRNA(Ile2) + L-lysine + ATP = lysidine(34) in tRNA(Ile2) + AMP + diphosphate + H(+). In terms of biological role, ligates lysine onto the cytidine present at position 34 of the AUA codon-specific tRNA(Ile) that contains the anticodon CAU, in an ATP-dependent manner. Cytidine is converted to lysidine, thus changing the amino acid specificity of the tRNA from methionine to isoleucine. This Thermosynechococcus vestitus (strain NIES-2133 / IAM M-273 / BP-1) protein is tRNA(Ile)-lysidine synthase.